Reading from the N-terminus, the 619-residue chain is (-)-camphene synthase, chloroplastic (619 aa).

The transit peptide at 1 to 47 directs the protein to the chloroplast; that stretch reads MALVSVAPLVSMRRSLFSSPYELKSIDKTIPNLVMCRKRMSGTPSIR. Positions 370, 374, and 522 each coordinate Mg(2+). Positions 370–374 match the DDXXD motif motif; the sequence is DDIYD.

Belongs to the terpene synthase family. Tpsd subfamily. Mg(2+) serves as cofactor. It depends on Mn(2+) as a cofactor.

It is found in the plastid. It localises to the chloroplast. It catalyses the reaction (2E)-geranyl diphosphate = (1S,4R)-camphene + diphosphate. The enzyme catalyses (2E)-geranyl diphosphate = (1R,5R)-alpha-pinene + diphosphate. It carries out the reaction (2E)-geranyl diphosphate = tricyclene + diphosphate. The catalysed reaction is (2E)-geranyl diphosphate = beta-myrcene + diphosphate. It catalyses the reaction (2E)-geranyl diphosphate = (1S,5S)-beta-pinene + diphosphate. The enzyme catalyses (2E)-geranyl diphosphate = (1S,5S)-alpha-pinene + diphosphate. The protein operates within terpene metabolism; oleoresin biosynthesis. It participates in secondary metabolite biosynthesis; terpenoid biosynthesis. In terms of biological role, monoterpene synthase (TPS) involved in the biosynthesis of monoterpene natural products included in conifer oleoresin secretions and volatile emissions; these compounds contribute to biotic and abiotic stress defense against herbivores and pathogens. Catalyzes the conversion of (2E)-geranyl diphosphate (GPP) to (-)-camphene, (+)-alpha-pinene and (-)-alpha-pinene, and, to a lower extent, to tricyclene, myrcene and (-)-beta-pinene. The sequence is that of (-)-camphene synthase, chloroplastic from Pinus contorta (Shore pine).